A 720-amino-acid chain; its full sequence is Protein unc-112 (720 aa).

Disordered regions lie at residues 145–170 (DLRRGTSDADNMNGPLSMRPGEESVG) and 210–236 (MGTLPRHGTLPRGVSPSPGAYNDTMRR). In terms of domain architecture, FERM spans 288-614 (WLDSSRSLME…ALPEHGIHYF (327 aa)). In terms of domain architecture, PH spans 402-507 (VPELADYLKY…WMAACRLASR (106 aa)).

This sequence belongs to the kindlin family. Interacts with pat-4/ILK. Probably forms a complex with pat-4 and pat-6. Component of an integrin containing attachment complex, composed of at least pat-2, pat-3, pat-4, pat-6, unc-52, unc-97 and unc-112. As to expression, mainly expressed in muscle cells in both embryos and adults.

Its subcellular location is the cell membrane. It localises to the cytoplasm. The protein resides in the myofibril. The protein localises to the sarcomere. It is found in the m line. Its function is as follows. Component of an integrin containing attachment complex, which is required for muscle development and maintenance. Probable regulator of cell-extracellular matrix adhesion. Required during initial muscle assembly to form dense bodies and M-lines. This chain is Protein unc-112, found in Caenorhabditis elegans.